The following is a 396-amino-acid chain: Elongation factor Tu (396 aa).

The tr-type G domain occupies Lys-10 to Glu-206. The tract at residues Gly-19–Thr-26 is G1. Gly-19–Thr-26 contributes to the GTP binding site. Thr-26 is a Mg(2+) binding site. The interval Gly-60–Asn-64 is G2. A G3 region spans residues Asp-81 to Gly-84. Residues Asp-81–His-85 and Asn-136–Asp-139 each bind GTP. Residues Asn-136 to Asp-139 are G4. Residues Ser-174–Leu-176 are G5.

It belongs to the TRAFAC class translation factor GTPase superfamily. Classic translation factor GTPase family. EF-Tu/EF-1A subfamily. Monomer.

It is found in the cytoplasm. The enzyme catalyses GTP + H2O = GDP + phosphate + H(+). In terms of biological role, GTP hydrolase that promotes the GTP-dependent binding of aminoacyl-tRNA to the A-site of ribosomes during protein biosynthesis. This chain is Elongation factor Tu, found in Thiobacillus denitrificans (strain ATCC 25259 / T1).